Reading from the N-terminus, the 220-residue chain is UPF0319 protein YccT (220 aa).

Positions 1–20 (MKTGALTTFLALCLPVTVFA) are cleaved as a signal peptide.

This sequence belongs to the UPF0319 family.

This Salmonella schwarzengrund (strain CVM19633) protein is UPF0319 protein YccT.